The primary structure comprises 167 residues: Photosystem I assembly protein Ycf3 (167 aa).

TPR repeat units follow at residues Ala-35–Pro-68, Ser-72–Leu-105, and Gly-120–Asn-153.

The protein belongs to the Ycf3 family.

Its subcellular location is the plastid. The protein resides in the chloroplast thylakoid membrane. In terms of biological role, essential for the assembly of the photosystem I (PSI) complex. May act as a chaperone-like factor to guide the assembly of the PSI subunits. The polypeptide is Photosystem I assembly protein Ycf3 (Marchantia polymorpha (Common liverwort)).